The sequence spans 364 residues: Aminomethyltransferase (364 aa).

Belongs to the GcvT family. As to quaternary structure, the glycine cleavage system is composed of four proteins: P, T, L and H.

The enzyme catalyses N(6)-[(R)-S(8)-aminomethyldihydrolipoyl]-L-lysyl-[protein] + (6S)-5,6,7,8-tetrahydrofolate = N(6)-[(R)-dihydrolipoyl]-L-lysyl-[protein] + (6R)-5,10-methylene-5,6,7,8-tetrahydrofolate + NH4(+). Functionally, the glycine cleavage system catalyzes the degradation of glycine. This is Aminomethyltransferase from Salmonella paratyphi B (strain ATCC BAA-1250 / SPB7).